The chain runs to 173 residues: MAIILGVDPGSRITGYGVIQCLGRQQLYLGSGCIRTSGEDLPLRLKQIFDGISEIIRQYQPDEFAIERVFLAKNADSALKLGQARGAAIVAATVANLPVAEYSATQIKNAVVGTGRAKKEQVQHMIQQLLKLPAAPQADAADALGVAVCHYHTNQSLVALSGRATTRTYGRYR.

Catalysis depends on residues D8, E67, and D139. Mg(2+) is bound by residues D8, E67, and D139.

Belongs to the RuvC family. As to quaternary structure, homodimer which binds Holliday junction (HJ) DNA. The HJ becomes 2-fold symmetrical on binding to RuvC with unstacked arms; it has a different conformation from HJ DNA in complex with RuvA. In the full resolvosome a probable DNA-RuvA(4)-RuvB(12)-RuvC(2) complex forms which resolves the HJ. Mg(2+) is required as a cofactor.

The protein resides in the cytoplasm. It catalyses the reaction Endonucleolytic cleavage at a junction such as a reciprocal single-stranded crossover between two homologous DNA duplexes (Holliday junction).. Its function is as follows. The RuvA-RuvB-RuvC complex processes Holliday junction (HJ) DNA during genetic recombination and DNA repair. Endonuclease that resolves HJ intermediates. Cleaves cruciform DNA by making single-stranded nicks across the HJ at symmetrical positions within the homologous arms, yielding a 5'-phosphate and a 3'-hydroxyl group; requires a central core of homology in the junction. The consensus cleavage sequence is 5'-(A/T)TT(C/G)-3'. Cleavage occurs on the 3'-side of the TT dinucleotide at the point of strand exchange. HJ branch migration catalyzed by RuvA-RuvB allows RuvC to scan DNA until it finds its consensus sequence, where it cleaves and resolves the cruciform DNA. The polypeptide is Crossover junction endodeoxyribonuclease RuvC (Shewanella sp. (strain ANA-3)).